The following is a 277-amino-acid chain: Phosphoribosylaminoimidazole-succinocarboxamide synthase (277 aa).

Belongs to the SAICAR synthetase family.

The enzyme catalyses 5-amino-1-(5-phospho-D-ribosyl)imidazole-4-carboxylate + L-aspartate + ATP = (2S)-2-[5-amino-1-(5-phospho-beta-D-ribosyl)imidazole-4-carboxamido]succinate + ADP + phosphate + 2 H(+). Its pathway is purine metabolism; IMP biosynthesis via de novo pathway; 5-amino-1-(5-phospho-D-ribosyl)imidazole-4-carboxamide from 5-amino-1-(5-phospho-D-ribosyl)imidazole-4-carboxylate: step 1/2. This is Phosphoribosylaminoimidazole-succinocarboxamide synthase from Salinispora tropica (strain ATCC BAA-916 / DSM 44818 / JCM 13857 / NBRC 105044 / CNB-440).